Here is a 290-residue protein sequence, read N- to C-terminus: Protein CREG2 (290 aa).

The signal sequence occupies residues 1–31; the sequence is MSVRRGRRPARPGTRLSWLLCCSALLSPAAG. N-linked (GlcNAc...) asparagine glycosylation is found at N165 and N166.

It belongs to the CREG family. In terms of processing, it is not sure whether N-glycosylation is on Asn-165 and/or Asn-166. In terms of tissue distribution, brain specific mainly in the limbic system and faintly in the spinal cord but not in cerebellum.

The protein localises to the secreted. The sequence is that of Protein CREG2 (CREG2) from Homo sapiens (Human).